The primary structure comprises 121 residues: UPF0295 protein ABC1323 (121 aa).

2 helical membrane-spanning segments follow: residues 14-34 (TFALSLVFVGILIMYVGIFFK) and 41-61 (VIAMILGFLAVIASTVVYFFI).

This sequence belongs to the UPF0295 family.

It localises to the cell membrane. This Shouchella clausii (strain KSM-K16) (Alkalihalobacillus clausii) protein is UPF0295 protein ABC1323.